The primary structure comprises 255 residues: Ribonuclease PH (255 aa).

Phosphate-binding positions include arginine 86 and 124 to 126 (GTR).

This sequence belongs to the RNase PH family. In terms of assembly, homohexameric ring arranged as a trimer of dimers.

It catalyses the reaction tRNA(n+1) + phosphate = tRNA(n) + a ribonucleoside 5'-diphosphate. Phosphorolytic 3'-5' exoribonuclease that plays an important role in tRNA 3'-end maturation. Removes nucleotide residues following the 3'-CCA terminus of tRNAs; can also add nucleotides to the ends of RNA molecules by using nucleoside diphosphates as substrates, but this may not be physiologically important. Probably plays a role in initiation of 16S rRNA degradation (leading to ribosome degradation) during starvation. The protein is Ribonuclease PH of Hydrogenobaculum sp. (strain Y04AAS1).